Reading from the N-terminus, the 104-residue chain is MIRKAFVMQVNADAHEEYQRRHNPIWPELEAVLKSHGAHHYAIYLDVERNLLFATVEIESEARWNAVASTDICQRWWKHMRDVMPANPDNSPVSAELKEVFWLA.

Residue Y18 participates in substrate binding. Catalysis depends on H22, which acts as the Proton donor. Substrate is bound by residues Y41 and 76 to 77 (WW).

This sequence belongs to the rhamnose mutarotase family. Homodimer.

The protein resides in the cytoplasm. It carries out the reaction alpha-L-rhamnose = beta-L-rhamnose. It functions in the pathway carbohydrate metabolism; L-rhamnose metabolism. In terms of biological role, involved in the anomeric conversion of L-rhamnose. The sequence is that of L-rhamnose mutarotase from Salmonella arizonae (strain ATCC BAA-731 / CDC346-86 / RSK2980).